The primary structure comprises 264 residues: Synaptophysin-like protein 2 (264 aa).

Residues 1–33 (MSSTESPSRAADKSPRQQVDRLLEGLRWRRLEE) are Cytoplasmic-facing. In terms of domain architecture, MARVEL spans 30-238 (RLEEPLGFIK…NCWFVFKETP (209 aa)). The helical transmembrane segment at 34-54 (PLGFIKVLQWLFAIFAFGSCG) threads the bilayer. Topologically, residues 55–116 (SYSGETGAMV…LMGDFSAPAE (62 aa)) are vesicular. Residues 117-137 (FFVTLGIFSFFYTMAALVVYL) form a helical membrane-spanning segment. The Cytoplasmic portion of the chain corresponds to 138–150 (RFHKLYTENKRFP). Residues 151–171 (LVDFCVTVSFTFFWLVAAAAW) form a helical membrane-spanning segment. The Vesicular segment spans residues 172–213 (GKGLTDVKGATRPSSLTAAMSVCHGEEAVCSAGATPSMGLAN). N-linked (GlcNAc...) asparagine glycosylation occurs at N213. A helical membrane pass occupies residues 214–234 (ISVLFGFINFFLWAGNCWFVF). Over 235-264 (KETPWHGQGQDQGQGPSQESAAEQGAVEKQ) the chain is Cytoplasmic. The interval 242–264 (QGQDQGQGPSQESAAEQGAVEKQ) is disordered.

The protein belongs to the synaptophysin/synaptobrevin family. In terms of tissue distribution, skeletal muscle.

It is found in the membrane. Its function is as follows. Involved in communication between the T-tubular and junctional sarcoplasmic reticulum (SR) membranes. This Oryctolagus cuniculus (Rabbit) protein is Synaptophysin-like protein 2 (SYPL2).